The sequence spans 506 residues: Dolichyl pyrophosphate Glc1Man9GlcNAc2 alpha-1,3-glucosyltransferase (506 aa).

The next 12 membrane-spanning stretches (helical) occupy residues arginine 10–serine 30, valine 101–tyrosine 121, asparagine 133–phenylalanine 153, leucine 176–alanine 196, leucine 219–tyrosine 239, tyrosine 261–leucine 281, proline 305–isoleucine 325, glycine 339–valine 359, histidine 384–tyrosine 401, tyrosine 406–alanine 426, tyrosine 454–glycine 474, and phenylalanine 479–tryptophan 499.

This sequence belongs to the ALG6/ALG8 glucosyltransferase family.

It is found in the endoplasmic reticulum membrane. It catalyses the reaction an alpha-D-Glc-(1-&gt;3)-alpha-D-Man-(1-&gt;2)-alpha-D-Man-(1-&gt;2)-alpha-D-Man-(1-&gt;3)-[alpha-D-Man-(1-&gt;2)-alpha-D-Man-(1-&gt;3)-[alpha-D-Man-(1-&gt;2)-alpha-D-Man-(1-&gt;6)]-alpha-D-Man-(1-&gt;6)]-beta-D-Man-(1-&gt;4)-beta-D-GlcNAc-(1-&gt;4)-alpha-D-GlcNAc-diphospho-di-trans,poly-cis-dolichol + a di-trans,poly-cis-dolichyl beta-D-glucosyl phosphate = an alpha-D-Glc-(1-&gt;3)-alpha-D-Glc-(1-&gt;3)-alpha-D-Man-(1-&gt;2)-alpha-D-Man-(1-&gt;2)-alpha-D-Man-(1-&gt;3)-[alpha-D-Man-(1-&gt;2)-alpha-D-Man-(1-&gt;3)-[alpha-D-Man-(1-&gt;2)-alpha-D-Man-(1-&gt;6)]-alpha-D-Man-(1-&gt;6)]-beta-D-Man-(1-&gt;4)-beta-D-GlcNAc-(1-&gt;4)-alpha-D-GlcNAc-diphospho-di-trans,poly-cis-dolichol + a di-trans,poly-cis-dolichyl phosphate + H(+). It functions in the pathway protein modification; protein glycosylation. Dolichyl pyrophosphate Glc1Man9GlcNAc2 alpha-1,3-glucosyltransferase that operates in the biosynthetic pathway of dolichol-linked oligosaccharides, the glycan precursors employed in protein asparagine (N)-glycosylation. The assembly of dolichol-linked oligosaccharides begins on the cytosolic side of the endoplasmic reticulum membrane and finishes in its lumen. The sequential addition of sugars to dolichol pyrophosphate produces dolichol-linked oligosaccharides containing fourteen sugars, including two GlcNAcs, nine mannoses and three glucoses. Once assembled, the oligosaccharide is transferred from the lipid to nascent proteins by oligosaccharyltransferases. In the lumen of the endoplasmic reticulum, adds the second glucose residue from dolichyl phosphate glucose (Dol-P-Glc) onto the lipid-linked oligosaccharide intermediate Glc(1)Man(9)GlcNAc(2)-PP-Dol to produce Glc(2)Man(9)GlcNAc(2)-PP-Dol. The sequence is that of Dolichyl pyrophosphate Glc1Man9GlcNAc2 alpha-1,3-glucosyltransferase from Arabidopsis thaliana (Mouse-ear cress).